We begin with the raw amino-acid sequence, 180 residues long: UPF0398 protein EF_1150 (180 aa).

It belongs to the UPF0398 family.

This is UPF0398 protein EF_1150 from Enterococcus faecalis (strain ATCC 700802 / V583).